A 361-amino-acid polypeptide reads, in one-letter code: Peptide chain release factor 1 (361 aa).

Gln-237 carries the post-translational modification N5-methylglutamine. The segment at 286–306 is disordered; it reads AKQDQEQAAKRKSLVGSGDRS.

This sequence belongs to the prokaryotic/mitochondrial release factor family. Methylated by PrmC. Methylation increases the termination efficiency of RF1.

Its subcellular location is the cytoplasm. Its function is as follows. Peptide chain release factor 1 directs the termination of translation in response to the peptide chain termination codons UAG and UAA. The chain is Peptide chain release factor 1 from Coxiella burnetii (strain CbuG_Q212) (Coxiella burnetii (strain Q212)).